The primary structure comprises 383 residues: Protein delta homolog 2 (383 aa).

The first 26 residues, 1–26 (MPSGCRCLHLVCLLCILGAPVKPARG), serve as a signal peptide directing secretion. EGF-like domains are found at residues 27–58 (NDCS…LHCE), 62–89 (RMPG…KFCD), 91–129 (DEHI…RDCE), and 131–172 (KAGP…ARCE). Residues 27–306 (NDCSSLCDLA…RQEAGLGEPS (280 aa)) lie on the Extracellular side of the membrane. Intrachain disulfides connect Cys-29–Cys-40, Cys-33–Cys-46, Cys-48–Cys-57, Cys-66–Cys-71, Cys-79–Cys-88, Cys-95–Cys-107, Cys-101–Cys-117, Cys-119–Cys-128, Cys-135–Cys-148, Cys-142–Cys-160, Cys-162–Cys-171, Cys-178–Cys-189, Cys-183–Cys-198, Cys-200–Cys-209, Cys-216–Cys-227, Cys-221–Cys-236, and Cys-238–Cys-247. The N-linked (GlcNAc...) asparagine glycan is linked to Asn-157. In terms of domain architecture, EGF-like 5; calcium-binding spans 174–210 (NVDDCLMRPCANGATCLDGINRFSCLCPEGFTGRFCT). Residues 212–248 (NLDDCASRPCQRGARCRDRVHDFDCLCPSGYGGKTCE) enclose the EGF-like 6; calcium-binding domain. The helical transmembrane segment at 307 to 327 (LVAVVVFGAVTAALVLSTVLL) threads the bilayer. Over 328 to 383 (TLRAWRRGFCPPGPCCYPAPHYAPARQDQECQVSMLPTGLPLPPDLPPEPGKTTAL) the chain is Cytoplasmic. The tract at residues 364 to 383 (PTGLPLPPDLPPEPGKTTAL) is disordered. The segment covering 367-377 (LPLPPDLPPEP) has biased composition (pro residues).

It is found in the membrane. Its function is as follows. Regulates adipogenesis. The sequence is that of Protein delta homolog 2 (DLK2) from Bos taurus (Bovine).